Reading from the N-terminus, the 334-residue chain is Heat-inducible transcription repressor HrcA (334 aa).

The protein belongs to the HrcA family.

In terms of biological role, negative regulator of class I heat shock genes (grpE-dnaK-dnaJ and groELS operons). Prevents heat-shock induction of these operons. The protein is Heat-inducible transcription repressor HrcA of Verminephrobacter eiseniae (strain EF01-2).